A 66-amino-acid chain; its full sequence is Large ribosomal subunit protein uL29 (66 aa).

The protein belongs to the universal ribosomal protein uL29 family.

The protein is Large ribosomal subunit protein uL29 of Thermococcus gammatolerans (strain DSM 15229 / JCM 11827 / EJ3).